The sequence spans 211 residues: Thymidylate kinase (211 aa).

Gly-11 to Thr-18 contributes to the ATP binding site.

It belongs to the thymidylate kinase family.

The catalysed reaction is dTMP + ATP = dTDP + ADP. Its function is as follows. Phosphorylation of dTMP to form dTDP in both de novo and salvage pathways of dTTP synthesis. In Streptococcus pyogenes serotype M3 (strain ATCC BAA-595 / MGAS315), this protein is Thymidylate kinase.